The primary structure comprises 466 residues: Cysteine--tRNA ligase (466 aa).

Cys28 contributes to the Zn(2+) binding site. The short motif at 30–40 (PTVYNFFHIGN) is the 'HIGH' region element. 3 residues coordinate Zn(2+): Cys208, His233, and Glu237. Residues 265–269 (KMSKS) carry the 'KMSKS' region motif. Lys268 is a binding site for ATP.

The protein belongs to the class-I aminoacyl-tRNA synthetase family. In terms of assembly, monomer. The cofactor is Zn(2+).

The protein resides in the cytoplasm. It catalyses the reaction tRNA(Cys) + L-cysteine + ATP = L-cysteinyl-tRNA(Cys) + AMP + diphosphate. In Clostridium perfringens (strain SM101 / Type A), this protein is Cysteine--tRNA ligase.